The chain runs to 378 residues: Quinolinate synthase (378 aa).

Residues His-59 and Ser-80 each contribute to the iminosuccinate site. Position 125 (Cys-125) interacts with [4Fe-4S] cluster. Iminosuccinate is bound by residues 151-153 (YAN) and Ser-168. Cys-212 contacts [4Fe-4S] cluster. Residues 238 to 240 (HPE) and Thr-255 contribute to the iminosuccinate site. Position 309 (Cys-309) interacts with [4Fe-4S] cluster.

Belongs to the quinolinate synthase family. Type 1 subfamily. The cofactor is [4Fe-4S] cluster.

The protein resides in the cytoplasm. It catalyses the reaction iminosuccinate + dihydroxyacetone phosphate = quinolinate + phosphate + 2 H2O + H(+). It functions in the pathway cofactor biosynthesis; NAD(+) biosynthesis; quinolinate from iminoaspartate: step 1/1. Its function is as follows. Catalyzes the condensation of iminoaspartate with dihydroxyacetone phosphate to form quinolinate. The protein is Quinolinate synthase of Burkholderia pseudomallei (strain 668).